The sequence spans 577 residues: Zinc finger protein 384 (577 aa).

The disordered stretch occupies residues threonine 171–glycine 225. The span at glutamate 175 to serine 185 shows a compositional bias: gly residues. Serine 214 bears the Phosphoserine mark. C2H2-type zinc fingers lie at residues tyrosine 228–histidine 250, histidine 256–histidine 278, tyrosine 284–histidine 306, histidine 317–histidine 339, tyrosine 345–histidine 367, tyrosine 373–histidine 397, phenylalanine 403–histidine 425, and tyrosine 433–histidine 455. A compositionally biased stretch (low complexity) spans glutamine 501–glutamine 515. Positions glutamine 501 to proline 550 are disordered.

It belongs to the krueppel C2H2-type zinc-finger protein family. In terms of assembly, interacts with BCAR1.

The protein resides in the nucleus. Its function is as follows. Transcription factor that binds the consensus DNA sequence [GC]AAAAA. Seems to bind and regulate the promoters of MMP1, MMP3, MMP7 and COL1A1. This Homo sapiens (Human) protein is Zinc finger protein 384 (ZNF384).